The chain runs to 141 residues: Large ribosomal subunit protein uL11 (141 aa).

This sequence belongs to the universal ribosomal protein uL11 family. In terms of assembly, part of the ribosomal stalk of the 50S ribosomal subunit. Interacts with L10 and the large rRNA to form the base of the stalk. L10 forms an elongated spine to which L12 dimers bind in a sequential fashion forming a multimeric L10(L12)X complex. One or more lysine residues are methylated.

Its function is as follows. Forms part of the ribosomal stalk which helps the ribosome interact with GTP-bound translation factors. The protein is Large ribosomal subunit protein uL11 of Fervidobacterium nodosum (strain ATCC 35602 / DSM 5306 / Rt17-B1).